A 1464-amino-acid chain; its full sequence is Neuropathy target esterase sws (1464 aa).

Residues 1-34 (MDVLELLRASATGCYNTIFSEAWHQYVHKQIAAA) are Lumenal-facing. Residues 35–55 (VYWYGALFLLGVLLFVWFLYF) traverse the membrane as a helical segment. The Cytoplasmic segment spans residues 56–1464 (KRLARLRLRD…GNTTNNDTKN (1409 aa)). Position 176–303 (176–303 (IFGHFEKPIF…IRVIQVIMIR (128 aa))) interacts with a nucleoside 3',5'-cyclic phosphate. Disordered stretches follow at residues 329–393 (NKNS…LHYH) and 409–438 (QQQQSLNSPRRNSTAHVSEAAAASTASSPT). Positions 338–367 (TGQTTSNVQSQTSQATQSRPSGTTRTPTSP) are enriched in low complexity. Over residues 409–420 (QQQQSLNSPRRN) the composition is skewed to polar residues. Position 421 is a phosphoserine (S421). The span at 422–438 (TAHVSEAAAASTASSPT) shows a compositional bias: low complexity. Residues 456 to 586 (ELGL…VVRR) and 575 to 702 (IVLG…LSHR) each bind a nucleoside 3',5'-cyclic phosphate. One can recognise a PNPLA domain in the interval 928 to 1094 (LVLGGGGARG…VNNLPGHLWR (167 aa)). A GXGXXG motif is present at residues 932-937 (GGGARG). Residues 959–963 (GVSIG) carry the GXSXG motif. S961 functions as the Nucleophile in the catalytic mechanism. D1081 functions as the Proton acceptor in the catalytic mechanism. The DGA/G motif lies at 1081–1083 (DGG). Residue S1175 is modified to Phosphoserine. Disordered stretches follow at residues 1352-1374 (VDKATQSTPTLPDKRSVQTPTPS) and 1400-1464 (ATNT…DTKN). Residues 1429–1444 (KRTEQDEHELEHEQVV) show a composition bias toward basic and acidic residues. The segment covering 1450 to 1464 (MDKQQGNTTNNDTKN) has biased composition (polar residues).

It belongs to the NTE family. Interacts with Pka-C3; interaction inhibits the catalytic function of Pka-C3 and the esterase activity of sws.

The protein localises to the endoplasmic reticulum membrane. The enzyme catalyses a 1-acyl-sn-glycero-3-phosphocholine + H2O = sn-glycerol 3-phosphocholine + a fatty acid + H(+). Functionally, phospholipase B that deacylates intracellular phosphatidylcholine (PtdCho), generating glycerophosphocholine (GroPtdCho). This deacylation occurs at both sn-2 and sn-1 positions of PtdCho. Its specific chemical modification by certain organophosphorus (OP) compounds leads to distal axonopathy. Plays a role in the signaling mechanism between neurons and glia that regulates glia wrapping during development of the adult brain. Essential for membrane lipid homeostasis and cell survival in both neurons and glia of the adult brain. The sequence is that of Neuropathy target esterase sws from Drosophila grimshawi (Hawaiian fruit fly).